A 123-amino-acid polypeptide reads, in one-letter code: Small ribosomal subunit protein uS12 (123 aa).

Residues 1 to 23 are disordered; sequence MPTISQLVKKGREKVEKKTKSPA. Asp89 carries the post-translational modification 3-methylthioaspartic acid.

The protein belongs to the universal ribosomal protein uS12 family. As to quaternary structure, part of the 30S ribosomal subunit. Contacts proteins S8 and S17. May interact with IF1 in the 30S initiation complex.

Its function is as follows. With S4 and S5 plays an important role in translational accuracy. In terms of biological role, interacts with and stabilizes bases of the 16S rRNA that are involved in tRNA selection in the A site and with the mRNA backbone. Located at the interface of the 30S and 50S subunits, it traverses the body of the 30S subunit contacting proteins on the other side and probably holding the rRNA structure together. The combined cluster of proteins S8, S12 and S17 appears to hold together the shoulder and platform of the 30S subunit. This is Small ribosomal subunit protein uS12 from Thermodesulfovibrio yellowstonii (strain ATCC 51303 / DSM 11347 / YP87).